The following is a 492-amino-acid chain: UPF0236 protein TTE1650/TTE2708 (492 aa).

It belongs to the UPF0236 family.

This chain is UPF0236 protein TTE1650/TTE2708, found in Caldanaerobacter subterraneus subsp. tengcongensis (strain DSM 15242 / JCM 11007 / NBRC 100824 / MB4) (Thermoanaerobacter tengcongensis).